A 320-amino-acid chain; its full sequence is ATP-dependent 6-phosphofructokinase (320 aa).

Gly12 lines the ATP pocket. ADP is bound by residues 22 to 26 (RGVVR) and 55 to 60 (RYSVSD). ATP contacts are provided by residues 73–74 (RF) and 103–106 (GDGS). Asp104 contributes to the Mg(2+) binding site. 126–128 (TID) provides a ligand contact to substrate. Catalysis depends on Asp128, which acts as the Proton acceptor. Arg155 contacts ADP. Residues Arg163 and 170–172 (MGR) contribute to the substrate site. Residues 186 to 188 (GCE), Lys212, and 214 to 216 (KKH) contribute to the ADP site. Substrate-binding positions include Glu223, Arg244, and 250 to 253 (HIQR).

The protein belongs to the phosphofructokinase type A (PFKA) family. ATP-dependent PFK group I subfamily. Prokaryotic clade 'B1' sub-subfamily. As to quaternary structure, homotetramer. Requires Mg(2+) as cofactor.

The protein localises to the cytoplasm. It catalyses the reaction beta-D-fructose 6-phosphate + ATP = beta-D-fructose 1,6-bisphosphate + ADP + H(+). It functions in the pathway carbohydrate degradation; glycolysis; D-glyceraldehyde 3-phosphate and glycerone phosphate from D-glucose: step 3/4. Its activity is regulated as follows. Allosterically activated by ADP and other diphosphonucleosides, and allosterically inhibited by phosphoenolpyruvate. Catalyzes the phosphorylation of D-fructose 6-phosphate to fructose 1,6-bisphosphate by ATP, the first committing step of glycolysis. This chain is ATP-dependent 6-phosphofructokinase, found in Buchnera aphidicola subsp. Schizaphis graminum (strain Sg).